A 471-amino-acid chain; its full sequence is Glutamate--tRNA ligase (471 aa).

The 'HIGH' region signature appears at proline 9 to glycine 19. Residues cysteine 98, cysteine 100, cysteine 125, and histidine 127 each contribute to the Zn(2+) site. Positions lysine 237–arginine 241 match the 'KMSKS' region motif. Position 240 (lysine 240) interacts with ATP.

Belongs to the class-I aminoacyl-tRNA synthetase family. Glutamate--tRNA ligase type 1 subfamily. In terms of assembly, monomer. The cofactor is Zn(2+).

The protein localises to the cytoplasm. The catalysed reaction is tRNA(Glu) + L-glutamate + ATP = L-glutamyl-tRNA(Glu) + AMP + diphosphate. In terms of biological role, catalyzes the attachment of glutamate to tRNA(Glu) in a two-step reaction: glutamate is first activated by ATP to form Glu-AMP and then transferred to the acceptor end of tRNA(Glu). This chain is Glutamate--tRNA ligase, found in Shigella boydii serotype 18 (strain CDC 3083-94 / BS512).